The following is a 2115-amino-acid chain: MTLIQTKHSASAAVFSPQSTAPKPTHLAHIRARLLEDDLLKPVKEAVVSLPKTWRALVSKQPELGKNRKASDLIEAFPSWIEDGKTEVLETDMSGLITLPLLAVIHIVQYLDYIQRLGISHSEFLESVESGGVQGYCIGLLSAIVVSSAEDEEALIQHAAHGIRLSLAIGAFGDIGSSSDEVVSNTLQVRLRNAGSEEDLVARFPGSYISTITDAKTMSIIAPPHLIDALKEHAETEGLRPRAMHIRSNLHNSRNTELAQQCSSLFEDCPFASPDTLQVAVRSNKTGCYLEQDATSLVEEAVSTVLASRCDWSLVMQGLADDLNQSGSKHHSILLFGMGDSVPGAPFREHSLDISKIDVLSLVETPLSATPPASSIDDFPPDSIAIVGSACRLPGANSLDELWDLIAAGRSRLEKVRTDRVNIKESYRASQDPEWTKKREFYGNFIDDVDAFDHAFFNISPREAKYMDPQQRLLLMAAFEAMDSSGYLRSHQRNDGDAVGCFLGASYTEYTENTSAYSPSAFTATSTIRAFLSGKISYHFGWTGPSEVIDTACSASIVAVHRAVQAINAGECPVALAGGVNIITGVNNYFDLGKASFLSQTGQCKPFDDSADGYCRADGVGLVVLKPLSKAVADGDYIQGVIPAIATNQGGIGAPGITVPDGIAQKALYRGILEKAGLKGEDISYVEAHGTGTQVGDPIEIGSIREVFGGAHRASPLHLGSLKANIGHSETAAGVASLLKVLSMVRNRGVPPLQGFKRLNHKIPALELDKMAIPTKLLPWDSDHRIACINSYGASGSNSALICSEWLEEPSKLPDVTGQPLQEYPILLSAASNESLLRYARHLADYITKSSADLTLGNLSYTLSQRRKHHRIRWSTTAKDLIGLIEQLRECTPADFVQAPQKSKKIVLTFSGQSRTTIGVSDSARLENPRFEHYIQQCNNILMSYGCPDLLPYLSQTDPISDPTIIQCGTVTVQYACAQCWIDGGLDVAGIVGHSLGELTALAISGALSLEDTLKVVYTRAEAIKAKWGPESGSMLAIHANQDTVKSIVEIIETMITNPDEALEIACYNSITSHIVVGKESSIEMAEKVIQQDARYHGLRYQRLNTSHGFHSRFTEPLLQDLIHVERSVEFRKPSIPLETSTQTPVDFAKKRHSKYLSNHAREPVFFVDAARRLESRLGECVWLEAGWNTPIVAMTKRAVANPSAHTFQAVTSPAAVAMELWREGIATTYWSFFTPKESGLKHIWLPPYSFDRPKYWLEHVDRAVQERDAAANGSASPPPKKVQQLVTLKKTEGTKSQFRLHTTTERYKRIVSGHAVRSKPLCPASMYMESAIMGTEQLGASLVGKTITFENVSFTKPLGCDENLEVYVNLEQNTAAGEEAWHYAVQSGGKGSHSEGDFFATSGEMADIQLYEMLIADKIEALRNDVDAERLRTATAYSIFSRVVEYSDLLRGISSITMGTRQALAQIKVPKSTFEAQESTVSDFYDAITLDTFIQVLGLLINSDNDSSADDEIYVASSIGKMVVSPTEFKKHATWNVYATYSASDSKASSGAVFVFSEDRKLVSFATKIQFMRIKAAKLEKVLESANPGSKTKSTNGNALPSVPRSVPAGPTSAPQQVAPTTMPSAPAPVPVVAAGASPSKIADLKSLISVYTGVPVDEMQDNQNFGDMGLDSLASMELADEMESKLGLKVETEDLLLGSVGSLIKLLAPSSGPTAALTEGLVESYDTCSESSDSIRNSTGFHTTIPATPAELHSNPPDSLDGSTVWTKPKHSLSARFKLDTMVYKEAEGIDIPADVYVPQEPPQQPMPVALMIHGGGHLTLSRRAVRPTQTKYLLSQGILPVSIDYRLCPQVNVIDGPVADTRDACEWAQRDLPKIMASRNIEVDASKLIVIGWSTGGTLAMTTAWTLPSAGLPPPVAILSFYCPVNYDPEAPIQMGEEHEKRNMSLSEIRRLLGPQPATSHASHTTDTTKLGWVQANDPRSELVLALIKEPRGMSLLFNGLPPTGEELPVPDAERAAALSPLVQVRKGNYDVPTYLIFGDEDEIAPFGKAVEFAQALKDAGVKSGFLPIKGGKHIFDLGISPGSKAWDESIGPGYDFLLGELENAHRRCRDV.

Positions M1–A21 are disordered. Residues V14–Q260 are N-terminal acylcarrier protein transacylase domain (SAT). A Ketosynthase family 3 (KS3) domain is found at P381 to E805. Active-site for beta-ketoacyl synthase activity residues include C553, H689, and H728. The interval L908–A1210 is malonyl-CoA:ACP transacylase (MAT) domain. Catalysis depends on S995, which acts as the For acyl/malonyl transferase activity. The tract at residues P1280 to M1406 is N-terminal hotdog fold. The PKS/mFAS DH domain occupies P1280–E1581. The interval Q1285–L1580 is product template (PT) domain. H1315 functions as the Proton acceptor; for dehydratase activity in the catalytic mechanism. The interval D1428–E1581 is C-terminal hotdog fold. D1492 (proton donor; for dehydratase activity) is an active-site residue. Residues A1587–M1624 form a disordered region. The segment covering N1588–A1600 has biased composition (polar residues). The Carrier domain maps to P1640–V1724. O-(pantetheine 4'-phosphoryl)serine is present on S1674. Residues S1734–P1748 are compositionally biased toward polar residues. Residues S1734–V1767 form a disordered region. A thioesterase (TE) domain region spans residues A1777 to N2107. Catalysis depends on for thioesterase activity residues S1897 and D2045.

It catalyses the reaction 3 malonyl-CoA + acetyl-CoA + 2 H(+) = orsellinate + 3 CO2 + 4 CoA. It functions in the pathway secondary metabolite biosynthesis; terpenoid biosynthesis. In terms of biological role, non-reducing polyketide synthase; part of the asc-1 gene cluster that mediates the biosynthesis of both ascochlorin and ascofuranone, a strong inhibitor of cyanide-insensitive alternative oxidases and a promising drug candidate against African trypanosomiasis. The first step in the pathway is performed by the non-reducing polyketide synthase ascC that produces orsellinic acid by condensing acetyl-CoA with 3 malonyl-CoA units. Orsellinic acid is then prenylated by the prenyltransferase ascA to yield ilicicolinic acid B. Ilicicolinic acid B is further reduced to ilicicolin B by the reductase ascB. The halogenase ascD then chlorinates ilicicolin B to produce ilicicolin A which is converted to ilicicolin A epoxide by the cytochrome P450 monooxygenase ascE that catalyzes stereoselective epoxidation of the terminal double bond of the prenyl group. Ilicicolin A epoxide is the last common precursor for the biosynthesis of ascofuranone and ascochlorin. The terpene cyclase ascF produces a monocyclic terpene, and the cyclization reaction is proposed to be initiated by protonation of the terminal epoxide of ilicicolin A epoxide to generate a monocyclic tertiarycation, which is followed by a series of hydride and methyl shifts with abstraction of proton, leading to the formation of the (14S,15R,19R)-trimethylcyclohexanone ring structure of ilicicolin C, which is finally reduced to ascochlorin by the dehydrogenase ascG. On the other hand, ilicicolin A epoxide is hydroxylated by the cytochrome P450 monooxygenase ascH, and the resultant product is cyclized by the terpene cyclase ascI to ascofuranol via protonation-initiated epoxide ring opening, which facilitates the 6-endo-tet cyclization to form the tetrahy-drofuran ring. Finally, ascofuranol is oxidized into ascofuranone by ascJ. The chain is Non-reducing polyketide synthase ascC from Acremonium egyptiacum (Oospora egyptiaca).